The following is a 562-amino-acid chain: Sperm-tail PG-rich repeat-containing protein 2 (562 aa).

3 STPGR repeats span residues G21–L31, S60–N73, and P96–P118. Disordered regions lie at residues K114–I136 and S192–Q215. The segment covering P127–I136 has biased composition (low complexity). Basic and acidic residues predominate over residues G193–D202. STPGR repeat units follow at residues P204–E227, P253–H271, T336–A350, T385–F409, T425–L462, and T478–S492. The segment at S543–A562 is disordered. The span at R551–A562 shows a compositional bias: basic residues.

The protein is Sperm-tail PG-rich repeat-containing protein 2 (stpg2) of Danio rerio (Zebrafish).